The sequence spans 238 residues: tRNA (guanine-N(7)-)-methyltransferase (238 aa).

Residues Met-1 to Asp-12 are compositionally biased toward polar residues. The segment at Met-1 to Ser-20 is disordered. S-adenosyl-L-methionine contacts are provided by Glu-70, Asp-95, Asp-122, and Asp-145. The active site involves Asp-145. Substrate is bound by residues Lys-149, Asp-181, and Thr-216–Glu-219.

The protein belongs to the class I-like SAM-binding methyltransferase superfamily. TrmB family.

The enzyme catalyses guanosine(46) in tRNA + S-adenosyl-L-methionine = N(7)-methylguanosine(46) in tRNA + S-adenosyl-L-homocysteine. It functions in the pathway tRNA modification; N(7)-methylguanine-tRNA biosynthesis. Its function is as follows. Catalyzes the formation of N(7)-methylguanine at position 46 (m7G46) in tRNA. This chain is tRNA (guanine-N(7)-)-methyltransferase, found in Neisseria gonorrhoeae (strain NCCP11945).